Consider the following 105-residue polypeptide: Large ribosomal subunit protein uL24 (105 aa).

Belongs to the universal ribosomal protein uL24 family. Part of the 50S ribosomal subunit.

One of two assembly initiator proteins, it binds directly to the 5'-end of the 23S rRNA, where it nucleates assembly of the 50S subunit. In terms of biological role, one of the proteins that surrounds the polypeptide exit tunnel on the outside of the subunit. The sequence is that of Large ribosomal subunit protein uL24 from Rhodospirillum centenum (strain ATCC 51521 / SW).